A 601-amino-acid chain; its full sequence is Elongation factor 4 (601 aa).

The tr-type G domain maps to 7-189 (KNIRNFSIVA…AIVTRLPPPM (183 aa)). Residues 19 to 24 (DHGKST) and 136 to 139 (NKVD) contribute to the GTP site.

The protein belongs to the TRAFAC class translation factor GTPase superfamily. Classic translation factor GTPase family. LepA subfamily.

It is found in the cell inner membrane. It catalyses the reaction GTP + H2O = GDP + phosphate + H(+). Required for accurate and efficient protein synthesis under certain stress conditions. May act as a fidelity factor of the translation reaction, by catalyzing a one-codon backward translocation of tRNAs on improperly translocated ribosomes. Back-translocation proceeds from a post-translocation (POST) complex to a pre-translocation (PRE) complex, thus giving elongation factor G a second chance to translocate the tRNAs correctly. Binds to ribosomes in a GTP-dependent manner. The protein is Elongation factor 4 of Xanthobacter autotrophicus (strain ATCC BAA-1158 / Py2).